A 499-amino-acid chain; its full sequence is Probable malate:quinone oxidoreductase (499 aa).

The protein belongs to the MQO family. FAD serves as cofactor.

It catalyses the reaction (S)-malate + a quinone = a quinol + oxaloacetate. Its pathway is carbohydrate metabolism; tricarboxylic acid cycle; oxaloacetate from (S)-malate (quinone route): step 1/1. This chain is Probable malate:quinone oxidoreductase, found in Exiguobacterium sp. (strain ATCC BAA-1283 / AT1b).